A 77-amino-acid chain; its full sequence is Translation initiation factor IF-1, chloroplastic (77 aa).

Positions 1-71 (MKEQKLIHEG…TKGRIIYRLR (71 aa)) constitute an S1-like domain.

The protein belongs to the IF-1 family. Component of the 30S ribosomal translation pre-initiation complex which assembles on the 30S ribosome in the order IF-2 and IF-3, IF-1 and N-formylmethionyl-tRNA(fMet); mRNA recruitment can occur at any time during PIC assembly.

The protein resides in the plastid. It is found in the chloroplast. Its function is as follows. One of the essential components for the initiation of protein synthesis. Stabilizes the binding of IF-2 and IF-3 on the 30S subunit to which N-formylmethionyl-tRNA(fMet) subsequently binds. Helps modulate mRNA selection, yielding the 30S pre-initiation complex (PIC). Upon addition of the 50S ribosomal subunit IF-1, IF-2 and IF-3 are released leaving the mature 70S translation initiation complex. This Drimys granadensis protein is Translation initiation factor IF-1, chloroplastic.